We begin with the raw amino-acid sequence, 662 residues long: Acetyl-coenzyme A synthetase (662 aa).

Residues 197 to 200 and T317 contribute to the CoA site; that span reads RKGK. Residues 393–395, 417–422, D510, and R525 each bind ATP; these read GEP and DTWWQT. S533 contributes to the CoA binding site. Position 536 (R536) interacts with ATP. Mg(2+) is bound by residues H549 and V552. At K623 the chain carries N6-acetyllysine.

This sequence belongs to the ATP-dependent AMP-binding enzyme family. Mg(2+) serves as cofactor. In terms of processing, acetylated. Deacetylation by the SIR2-homolog deacetylase activates the enzyme.

It carries out the reaction acetate + ATP + CoA = acetyl-CoA + AMP + diphosphate. Functionally, catalyzes the conversion of acetate into acetyl-CoA (AcCoA), an essential intermediate at the junction of anabolic and catabolic pathways. AcsA undergoes a two-step reaction. In the first half reaction, AcsA combines acetate with ATP to form acetyl-adenylate (AcAMP) intermediate. In the second half reaction, it can then transfer the acetyl group from AcAMP to the sulfhydryl group of CoA, forming the product AcCoA. The polypeptide is Acetyl-coenzyme A synthetase (Helicobacter pylori (strain HPAG1)).